The following is a 1405-amino-acid chain: Rho guanine nucleotide exchange factor 18 (1405 aa).

3 disordered regions span residues 1 to 47 (MGSE…EDGF), 92 to 115 (ETHRQEARRESSHTSCEGASALPQ), and 289 to 330 (PGKS…PGKR). 2 stretches are compositionally biased toward basic and acidic residues: residues 92-103 (ETHRQEARRESS) and 308-330 (RQKEKGKSPAHLKDKTQDLPGKR). The C2H2-type; degenerate zinc-finger motif lies at 347–372 (SSCPLCGEPLLNSASLKEHPRTTLLS). The DH domain maps to 485-682 (KRQDVLYELM…KDIISQVDAK (198 aa)). In terms of domain architecture, PH spans 723–825 (QLHLEGALCW…WMAHIRRAVE (103 aa)). The interval 936–1016 (QVEEGSVSAG…PQAVEMPSTE (81 aa)) is disordered. T952 is subject to Phosphothreonine. S961 carries the phosphoserine modification. Positions 1084–1181 (FEKQREERAG…RERLELLRRF (98 aa)) form a coiled coil. 3 disordered regions span residues 1198–1242 (EAQP…VERP), 1274–1309 (RQTAVQQQIPTKLAASTKGGKEKGSKSRGSQRWESS), and 1328–1405 (ESAS…VIFF). A phosphoserine mark is found at S1336 and S1338. Pro residues predominate over residues 1355–1365 (FPAPSPAPAAT). A compositionally biased stretch (low complexity) spans 1375-1394 (TSLPPVSPASSLPTTPLATT). Positions 1396–1405 (EVSKEDVIFF) are enriched in basic and acidic residues.

As to quaternary structure, interacts with SEPT9; interaction may inhibit GEF activity. Interacts with Gbetagamma subunits GNB1 and GNG2. Interacts with EPB41L4B. Interacts with PATJ (via C-terminus).

It is found in the cytoplasm. Its subcellular location is the cytoskeleton. It localises to the cell membrane. The protein localises to the apical cell membrane. Acts as a guanine nucleotide exchange factor (GEF) for RhoA GTPases. May play a role in actin cytoskeleton reorganization in different tissues since its activation induces formation of actin stress fibers. Also acts as a GEF for RAC1, inducing production of reactive oxygen species (ROS). Does not act as a GEF for CDC42. The G protein beta-gamma (Gbetagamma) subunits of heterotrimeric G proteins act as activators, explaining the integrated effects of LPA and other G-protein coupled receptor agonists on actin stress fiber formation, cell shape change and ROS production. Required for EPB41L4B-mediated regulation of the circumferential actomyosin belt in epithelial cells. This chain is Rho guanine nucleotide exchange factor 18 (Arhgef18), found in Mus musculus (Mouse).